The following is a 974-amino-acid chain: Collagen alpha-1(I) chain (974 aa).

Positions 1–14 (GISVPGPMGPSGPR) are enriched in low complexity. The segment at 1–974 (GISVPGPMGP…PGPPGPPGPP (974 aa)) is disordered. 4-hydroxyproline is present on residues P17, P20, P23, P32, P35, P38, P53, P68, P75, and P81. Residues 25-44 (PQGFQGPPGEPGEPGASGPM) are compositionally biased toward low complexity. A compositionally biased stretch (basic and acidic residues) spans 56–73 (NGDDGEAGKPGRPGERRG). Residue K84 is modified to 5-hydroxylysine; alternate. An O-linked (Gal...) hydroxylysine; alternate glycan is attached at K84. The residue at position 90 (S90) is a Phosphoserine. Positions 98-114 (DAGPAGPKGEPGSPGEN) are enriched in low complexity. 16 positions are modified to 4-hydroxyproline: P108, P111, P117, P126, P132, P153, P162, P165, P192, P195, P207, P213, P222, P228, P231, and P245. The segment covering 132–150 (PGASGPAGARGNDGATGAA) has biased composition (low complexity). The span at 152-164 (PPGPTGPAGPPGF) shows a compositional bias: pro residues. Residues 198–228 (AGAAGPAGNPGADGQPGAKGANGAPGIAGAP) show a composition bias toward low complexity. The residue at position 248 (K248) is a 5-hydroxylysine. 4-hydroxyproline is present on residues P254, P257, P269, P278, P293, P299, P308, and P314. Residues 303-312 (GERGGPGSRG) are compositionally biased toward gly residues. A 5-hydroxylysine modification is found at K323. A 4-hydroxyproline mark is found at P328, P337, P343, P349, P358, P361, P370, P379, P385, P397, P406, P415, P418, P436, P454, P460, P466, P472, P484, P493, P505, P520, P527, and P536. The segment covering 352 to 378 (KGLTGSPGSPGPDGKTGPPGPAGQDGR) has biased composition (low complexity). Residues 387-406 (ARGQAGVMGFPGPKGAAGEP) are compositionally biased toward low complexity. A compositionally biased stretch (low complexity) spans 504-517 (APGNDGAKGDAGAP). At K548 the chain carries 5-hydroxylysine. 4-hydroxyproline is present on residues P554, P569, and P575. The span at 581–595 (SGPSGPAGPTGARGA) shows a compositional bias: low complexity. S584 carries the post-translational modification Phosphoserine. Residues P596, P602, P605, P614, P620, P638, P647, and P656 each carry the 4-hydroxyproline modification. The segment covering 608 to 635 (AGFAGPPGADGQPGAKGEPGDAGAKGDA) has biased composition (low complexity). Residues 637 to 649 (PPGPAGPTGPPGP) show a composition bias toward pro residues. K659 bears the 5-hydroxylysine mark. Residues 664 to 680 (SAGPPGATGFPGAAGRV) show a composition bias toward low complexity. P668 and P674 each carry 4-hydroxyproline. Residue P682 is modified to 3-hydroxyproline. 4-hydroxyproline occurs at positions 683, 692, 695, 716, 725, 733, 742, 760, 769, 772, 778, 793, 799, 805, 814, and 820. Over residues 709–718 (ETGPAGRPGE) the composition is skewed to low complexity. Positions 730–742 (KGSPGADGPAGAP) are enriched in low complexity. A compositionally biased stretch (pro residues) spans 792–802 (PPGPVGPPGLA). Residues 804–826 (PPGESGREGSPGAEGSPGRDGSP) show a composition bias toward low complexity. Residues 828–844 (PKGPPGAPGAPGAPGPV) are compositionally biased toward pro residues. At K829 the chain carries 5-hydroxylysine. 4-hydroxyproline occurs at positions 832, 835, and 838. The span at 865–879 (AGPAGARGPAGPQGP) shows a compositional bias: low complexity. A compositionally biased stretch (basic and acidic residues) spans 880 to 894 (RGDKGETGEQGDRRG). K883 carries the 5-hydroxylysine modification. A 4-hydroxyproline mark is found at P905, P908, P926, and P941. Over residues 908–941 (PGEQGPSGASGPAGPRGPPGSAGSPGKDGLNGLP) the composition is skewed to low complexity. Position 946 is a 3-hydroxyproline (P946). At P947 the chain carries 4-hydroxyproline. The span at 959–974 (VGPPGPPGPPGPPGPP) shows a compositional bias: pro residues. 3-hydroxyproline is present on P961. At P962 the chain carries 4-hydroxyproline. P964 carries the 3-hydroxyproline modification. At P965 the chain carries 4-hydroxyproline. P967 is subject to 3-hydroxyproline. P968, P971, and P974 each carry 4-hydroxyproline.

The protein belongs to the fibrillar collagen family. As to quaternary structure, trimers of one alpha 2(I) and two alpha 1(I) chains. In terms of processing, contains mostly 4-hydroxyproline. Proline residues at the third position of the tripeptide repeating unit (G-X-Y) are hydroxylated in some or all of the chains. Contains 3-hydroxyproline at a few sites. This modification occurs on the first proline residue in the sequence motif Gly-Pro-Hyp, where Hyp is 4-hydroxyproline. Post-translationally, lysine residues at the third position of the tripeptide repeating unit (G-X-Y) are 5-hydroxylated in some or all of the chains. In terms of processing, O-glycosylated on hydroxylated lysine residues. The O-linked glycan consists of a Glc-Gal disaccharide. In terms of tissue distribution, expressed in bones.

Its subcellular location is the secreted. It is found in the extracellular space. The protein resides in the extracellular matrix. Functionally, type I collagen is a member of group I collagen (fibrillar forming collagen). The protein is Collagen alpha-1(I) chain of Scelidodon sp. (strain SLP-2019) (South American ground sloth).